We begin with the raw amino-acid sequence, 199 residues long: 7-methyl-GTP pyrophosphatase (199 aa).

The Proton acceptor role is filled by D76.

This sequence belongs to the Maf family. YceF subfamily. The cofactor is a divalent metal cation.

Its subcellular location is the cytoplasm. It catalyses the reaction N(7)-methyl-GTP + H2O = N(7)-methyl-GMP + diphosphate + H(+). Nucleoside triphosphate pyrophosphatase that hydrolyzes 7-methyl-GTP (m(7)GTP). May have a dual role in cell division arrest and in preventing the incorporation of modified nucleotides into cellular nucleic acids. In Brucella abortus biovar 1 (strain 9-941), this protein is 7-methyl-GTP pyrophosphatase.